We begin with the raw amino-acid sequence, 114 residues long: Histone H3-6 (114 aa).

The span at N1–K17 shows a compositional bias: basic residues. Positions N1–H32 are disordered. The span at K18–V28 shows a compositional bias: low complexity.

This sequence belongs to the histone H3 family. As to quaternary structure, the nucleosome is a histone octamer containing two molecules each of H2A, H2B, H3 and H4 assembled in one H3-H4 heterotetramer and two H2A-H2B heterodimers. The octamer wraps approximately 147 bp of DNA.

It localises to the nucleus. It is found in the chromosome. Its function is as follows. Core component of nucleosome. Nucleosomes wrap and compact DNA into chromatin, limiting DNA accessibility to the cellular machineries which require DNA as a template. Histones thereby play a central role in transcription regulation, DNA repair, DNA replication and chromosomal stability. DNA accessibility is regulated via a complex set of post-translational modifications of histones, also called histone code, and nucleosome remodeling. This Stylonychia lemnae (Ciliate) protein is Histone H3-6 (H3-6).